Reading from the N-terminus, the 1380-residue chain is DNA-directed RNA polymerase subunit beta (1380 aa).

Belongs to the RNA polymerase beta chain family. As to quaternary structure, the RNAP catalytic core consists of 2 alpha, 1 beta, 1 beta' and 1 omega subunit. When a sigma factor is associated with the core the holoenzyme is formed, which can initiate transcription.

The enzyme catalyses RNA(n) + a ribonucleoside 5'-triphosphate = RNA(n+1) + diphosphate. DNA-dependent RNA polymerase catalyzes the transcription of DNA into RNA using the four ribonucleoside triphosphates as substrates. The chain is DNA-directed RNA polymerase subunit beta from Ehrlichia canis (strain Jake).